We begin with the raw amino-acid sequence, 1072 residues long: DNA-directed RNA polymerase subunit beta (1072 aa).

This sequence belongs to the RNA polymerase beta chain family. As to quaternary structure, in plastids the minimal PEP RNA polymerase catalytic core is composed of four subunits: alpha, beta, beta', and beta''. When a (nuclear-encoded) sigma factor is associated with the core the holoenzyme is formed, which can initiate transcription.

It is found in the plastid. Its subcellular location is the chloroplast. It carries out the reaction RNA(n) + a ribonucleoside 5'-triphosphate = RNA(n+1) + diphosphate. Its function is as follows. DNA-dependent RNA polymerase catalyzes the transcription of DNA into RNA using the four ribonucleoside triphosphates as substrates. This is DNA-directed RNA polymerase subunit beta from Lemna minor (Common duckweed).